Reading from the N-terminus, the 283-residue chain is Biotin synthase (283 aa).

A Radical SAM core domain is found at 3 to 232 (KISNEIFLCS…NTRLMIAGGR (230 aa)). [4Fe-4S] cluster contacts are provided by Cys21, Cys25, and Cys28. Residues Cys65, Cys100, and Arg225 each coordinate [2Fe-2S] cluster.

This sequence belongs to the radical SAM superfamily. Biotin synthase family. In terms of assembly, homodimer. It depends on [4Fe-4S] cluster as a cofactor. The cofactor is [2Fe-2S] cluster.

It catalyses the reaction (4R,5S)-dethiobiotin + (sulfur carrier)-SH + 2 reduced [2Fe-2S]-[ferredoxin] + 2 S-adenosyl-L-methionine = (sulfur carrier)-H + biotin + 2 5'-deoxyadenosine + 2 L-methionine + 2 oxidized [2Fe-2S]-[ferredoxin]. The protein operates within cofactor biosynthesis; biotin biosynthesis; biotin from 7,8-diaminononanoate: step 2/2. Its function is as follows. Catalyzes the conversion of dethiobiotin (DTB) to biotin by the insertion of a sulfur atom into dethiobiotin via a radical-based mechanism. This chain is Biotin synthase, found in Helicobacter hepaticus (strain ATCC 51449 / 3B1).